Consider the following 312-residue polypeptide: Ribosomal RNA small subunit methyltransferase H (312 aa).

Residues 35–37, aspartate 55, phenylalanine 85, aspartate 101, and glutamine 108 each bind S-adenosyl-L-methionine; that span reads GGH.

It belongs to the methyltransferase superfamily. RsmH family.

The protein resides in the cytoplasm. The catalysed reaction is cytidine(1402) in 16S rRNA + S-adenosyl-L-methionine = N(4)-methylcytidine(1402) in 16S rRNA + S-adenosyl-L-homocysteine + H(+). In terms of biological role, specifically methylates the N4 position of cytidine in position 1402 (C1402) of 16S rRNA. The chain is Ribosomal RNA small subunit methyltransferase H from Buchnera aphidicola subsp. Acyrthosiphon pisum (strain Tuc7).